Consider the following 88-residue polypeptide: MHESTILSAGSTNPFNRIVSAVMLALIELYRRWISPLIGPRCRFIPTCSAYGIEAIQRHGPWRGGWLTLRRLLRCHPFTPCGCDPVPD.

It belongs to the UPF0161 family.

The protein resides in the cell inner membrane. Functionally, could be involved in insertion of integral membrane proteins into the membrane. The polypeptide is Putative membrane protein insertion efficiency factor (Synechococcus sp. (strain CC9311)).